A 1069-amino-acid polypeptide reads, in one-letter code: Rab GTPase-activating protein 1 (1069 aa).

The tract at residues Met-1–Glu-79 is disordered. Residues Val-7–Ser-22 show a composition bias toward low complexity. At Ser-42 the chain carries Phosphoserine. In terms of domain architecture, PID spans Glu-142 to Ile-298. Ser-360 bears the Phosphoserine mark. Positions Glu-482–Gly-527 are disordered. Residues Thr-489–Ile-506 are compositionally biased toward polar residues. Over residues Pro-510 to Glu-520 the composition is skewed to acidic residues. One can recognise a Rab-GAP TBC domain in the interval Gly-566–Gly-752. Positions Lys-798–Lys-1047 form a coiled coil. The residue at position 996 (Thr-996) is a Phosphothreonine.

In terms of assembly, interacts with RAB6A and tubulin gamma.

It is found in the cytoplasm. The protein resides in the cytosol. It localises to the cytoskeleton. Its subcellular location is the microtubule organizing center. The protein localises to the centrosome. In terms of biological role, may act as a GTPase-activating protein of RAB6A. May play a role in microtubule nucleation by centrosome. May participate in a RAB6A-mediated pathway involved in the metaphase-anaphase transition. The protein is Rab GTPase-activating protein 1 of Pongo abelii (Sumatran orangutan).